Here is a 276-residue protein sequence, read N- to C-terminus: Large ribosomal subunit protein uL2 (276 aa).

Residues 224–276 (VMNPVDHPHGGGEGKAPIGRKSPMTPWGKPTLGYKTRKKKNKSDKFIIRRRKK) form a disordered region. Basic residues predominate over residues 258–276 (KTRKKKNKSDKFIIRRRKK).

This sequence belongs to the universal ribosomal protein uL2 family. As to quaternary structure, part of the 50S ribosomal subunit. Forms a bridge to the 30S subunit in the 70S ribosome.

In terms of biological role, one of the primary rRNA binding proteins. Required for association of the 30S and 50S subunits to form the 70S ribosome, for tRNA binding and peptide bond formation. It has been suggested to have peptidyltransferase activity; this is somewhat controversial. Makes several contacts with the 16S rRNA in the 70S ribosome. The chain is Large ribosomal subunit protein uL2 from Geobacillus kaustophilus (strain HTA426).